The sequence spans 263 residues: 3-deoxy-manno-octulosonate cytidylyltransferase (263 aa).

Belongs to the KdsB family.

It is found in the cytoplasm. It carries out the reaction 3-deoxy-alpha-D-manno-oct-2-ulosonate + CTP = CMP-3-deoxy-beta-D-manno-octulosonate + diphosphate. It participates in nucleotide-sugar biosynthesis; CMP-3-deoxy-D-manno-octulosonate biosynthesis; CMP-3-deoxy-D-manno-octulosonate from 3-deoxy-D-manno-octulosonate and CTP: step 1/1. It functions in the pathway bacterial outer membrane biogenesis; lipopolysaccharide biosynthesis. Its function is as follows. Activates KDO (a required 8-carbon sugar) for incorporation into bacterial lipopolysaccharide in Gram-negative bacteria. The polypeptide is 3-deoxy-manno-octulosonate cytidylyltransferase (Burkholderia vietnamiensis (strain G4 / LMG 22486) (Burkholderia cepacia (strain R1808))).